We begin with the raw amino-acid sequence, 480 residues long: Glycogen synthase (480 aa).

Lysine 15 serves as a coordination point for ADP-alpha-D-glucose.

It belongs to the glycosyltransferase 1 family. Bacterial/plant glycogen synthase subfamily.

It carries out the reaction [(1-&gt;4)-alpha-D-glucosyl](n) + ADP-alpha-D-glucose = [(1-&gt;4)-alpha-D-glucosyl](n+1) + ADP + H(+). It participates in glycan biosynthesis; glycogen biosynthesis. In terms of biological role, synthesizes alpha-1,4-glucan chains using ADP-glucose. This chain is Glycogen synthase, found in Clostridioides difficile (strain 630) (Peptoclostridium difficile).